The following is a 154-amino-acid chain: Myoglobin (154 aa).

A Globin domain is found at 2 to 148 (VLSEGEWQLV…FRKDIAAKYK (147 aa)). Ser4 is subject to Phosphoserine. A nitrite-binding site is contributed by His65. An O2-binding site is contributed by His65. At Thr68 the chain carries Phosphothreonine. His94 serves as a coordination point for heme b.

It belongs to the globin family. In terms of assembly, monomeric.

The protein localises to the cytoplasm. Its subcellular location is the sarcoplasm. The catalysed reaction is Fe(III)-heme b-[protein] + nitric oxide + H2O = Fe(II)-heme b-[protein] + nitrite + 2 H(+). It carries out the reaction H2O2 + AH2 = A + 2 H2O. In terms of biological role, monomeric heme protein which primary function is to store oxygen and facilitate its diffusion within muscle tissues. Reversibly binds oxygen through a pentacoordinated heme iron and enables its timely and efficient release as needed during periods of heightened demand. Depending on the oxidative conditions of tissues and cells, and in addition to its ability to bind oxygen, it also has a nitrite reductase activity whereby it regulates the production of bioactive nitric oxide. Under stress conditions, like hypoxia and anoxia, it also protects cells against reactive oxygen species thanks to its pseudoperoxidase activity. The protein is Myoglobin (MB) of Kogia breviceps (Pygmy sperm whale).